The following is a 236-amino-acid chain: 2,3,4,5-tetrahydropyridine-2,6-dicarboxylate N-acetyltransferase (236 aa).

The protein belongs to the transferase hexapeptide repeat family. DapH subfamily.

The enzyme catalyses (S)-2,3,4,5-tetrahydrodipicolinate + acetyl-CoA + H2O = L-2-acetamido-6-oxoheptanedioate + CoA. It participates in amino-acid biosynthesis; L-lysine biosynthesis via DAP pathway; LL-2,6-diaminopimelate from (S)-tetrahydrodipicolinate (acetylase route): step 1/3. Catalyzes the transfer of an acetyl group from acetyl-CoA to tetrahydrodipicolinate. This Pediococcus pentosaceus (strain ATCC 25745 / CCUG 21536 / LMG 10740 / 183-1w) protein is 2,3,4,5-tetrahydropyridine-2,6-dicarboxylate N-acetyltransferase.